Consider the following 424-residue polypeptide: COUP transcription factor 1 (424 aa).

Positions 1–82 (MAMVVSSWRD…QGPPGSGQSQ (82 aa)) are disordered. Positions 39–68 (EQQQQQAGSGAPHTPQTPGQPGAPATPGTA) are enriched in low complexity. Positions 84-159 (HIECVVCGDK…VGMRREAVQR (76 aa)) form a DNA-binding region, nuclear receptor. 2 NR C4-type zinc fingers span residues 87-107 (CVVC…CEGC) and 123-147 (CRAN…LKKC). The NR LBD domain maps to 185 to 411 (YLSGYISLLL…TLIRDMLLSG (227 aa)).

It belongs to the nuclear hormone receptor family. NR2 subfamily. In terms of assembly, binds DNA as dimer; homodimer and probable heterodimer with NR2F6. Interacts with GTF2B; this interaction is direct. Interacts with COPS2.

The protein localises to the nucleus. Coup (chicken ovalbumin upstream promoter) transcription factor binds to the ovalbumin promoter and, in conjunction with another protein (S300-II) stimulates initiation of transcription. Binds to both direct repeats and palindromes of the 5'-AGGTCA-3' motif. Represses transcriptional activity of LHCG. The chain is COUP transcription factor 1 (NR2F1) from Bos taurus (Bovine).